The primary structure comprises 390 residues: Succinate--CoA ligase [ADP-forming] subunit beta (390 aa).

The ATP-grasp domain maps to 9–245; sequence KHLLKKYNIP…TTQEDEHETM (237 aa). ATP is bound by residues Lys-46, 53 to 55, Glu-99, Ser-102, and Glu-107; that span reads GRG. The Mg(2+) site is built by Asn-200 and Asp-214. Substrate-binding positions include Asn-265 and 322 to 324; that span reads GIV.

Belongs to the succinate/malate CoA ligase beta subunit family. In terms of assembly, heterotetramer of two alpha and two beta subunits. Mg(2+) serves as cofactor.

The catalysed reaction is succinate + ATP + CoA = succinyl-CoA + ADP + phosphate. It carries out the reaction GTP + succinate + CoA = succinyl-CoA + GDP + phosphate. It participates in carbohydrate metabolism; tricarboxylic acid cycle; succinate from succinyl-CoA (ligase route): step 1/1. Functionally, succinyl-CoA synthetase functions in the citric acid cycle (TCA), coupling the hydrolysis of succinyl-CoA to the synthesis of either ATP or GTP and thus represents the only step of substrate-level phosphorylation in the TCA. The beta subunit provides nucleotide specificity of the enzyme and binds the substrate succinate, while the binding sites for coenzyme A and phosphate are found in the alpha subunit. This chain is Succinate--CoA ligase [ADP-forming] subunit beta, found in Coxiella burnetii (strain Dugway 5J108-111).